A 330-amino-acid chain; its full sequence is Free fatty acid receptor 2 (330 aa).

Topologically, residues 1 to 8 (MTPDWHSS) are extracellular. A helical transmembrane segment spans residues 9 to 29 (LILTAYILIFLTGLPANLLAL). Over 30 to 43 (RAFVSRVRQPQPAP) the chain is Cytoplasmic. Residues 44-64 (VHILLLNLTLADLLLLLLLPF) form a helical membrane-spanning segment. Residues 65-79 (RIVEAASNFRWYLPK) are Extracellular-facing. A helical membrane pass occupies residues 80–100 (IVCALTGFGFYSSIYCSTWLL). At 101–126 (AGISIERYLGVAFPVQYKLSRRPLYG) the chain is on the cytoplasmic side. Residues 127-147 (VIAALVAWIMSFGHCTIVIIV) form a helical membrane-spanning segment. Residues 148 to 184 (QYLNSTEQVGTENQITCYENFTQAQLDVVLPVRLELC) are Extracellular-facing. Residues Asn-151 and Asn-167 are each glycosylated (N-linked (GlcNAc...) asparagine). The helical transmembrane segment at 185 to 205 (LVLFFVPMTVTIFCYWRFVWI) threads the bilayer. Topologically, residues 206 to 219 (MLTQPHVGAQRRRR) are cytoplasmic. The helical transmembrane segment at 220 to 240 (AVGLAVVTLLNFLVCFGPYNM) threads the bilayer. The Extracellular portion of the chain corresponds to 241–255 (SHLVGFHLRQSPSWR). The chain crosses the membrane as a helical span at residues 256–276 (VEAVVFSSLNASLDPLLFYFS). Topologically, residues 277–330 (SSVVRRAFGKGLLLLRNPGSSMLGRGAEETVEGTKTDRGGSQTEGAQSSDFVTE) are cytoplasmic. Residues 300-330 (GRGAEETVEGTKTDRGGSQTEGAQSSDFVTE) are disordered. Over residues 302 to 314 (GAEETVEGTKTDR) the composition is skewed to basic and acidic residues. Residues 315–330 (GGSQTEGAQSSDFVTE) show a composition bias toward polar residues.

This sequence belongs to the G-protein coupled receptor 1 family. As to quaternary structure, interacts with FCN1 (via Fibrinogen C-terminal domain). In terms of tissue distribution, detected in whole wall and separated mucosa in the distal ileum and colon. Expressed by enteroendocrine cells expressing peptide YY (PYY) (at protein level).

The protein localises to the cell membrane. Its function is as follows. G protein-coupled receptor that is activated by a major product of dietary fiber digestion, the short chain fatty acids (SCFAs), and that plays a role in the regulation of whole-body energy homeostasis and in intestinal immunity. In omnivorous mammals, the short chain fatty acids acetate, propionate and butyrate are produced primarily by the gut microbiome that metabolizes dietary fibers. SCFAs serve as a source of energy but also act as signaling molecules. That G protein-coupled receptor is probably coupled to the pertussis toxin-sensitive, G(i/o)-alpha family of G proteins but also to the Gq family. Its activation results in the formation of inositol 1,4,5-trisphosphate, the mobilization of intracellular calcium, the phosphorylation of the MAPK3/ERK1 and MAPK1/ERK2 kinases and the inhibition of intracellular cAMP accumulation. May play a role in glucose homeostasis by regulating the secretion of GLP-1, in response to short-chain fatty acids accumulating in the intestine. May also regulate the production of LEP/Leptin, a hormone acting on the central nervous system to inhibit food intake. Finally, may also regulate whole-body energy homeostasis through adipogenesis regulating both differentiation and lipid storage of adipocytes. In parallel to its role in energy homeostasis, may also mediate the activation of the inflammatory and immune responses by SCFA in the intestine, regulating the rapid production of chemokines and cytokines. May also play a role in the resolution of the inflammatory response and control chemotaxis in neutrophils. In addition to SCFAs, may also be activated by the extracellular lectin FCN1 in a process leading to activation of monocytes and inducing the secretion of interleukin-8/IL-8 in response to the presence of microbes. In Rattus norvegicus (Rat), this protein is Free fatty acid receptor 2 (Ffar2).